The primary structure comprises 76 residues: Probable 26S proteasome complex subunit dss-1 (76 aa).

Disordered stretches follow at residues 1–28 (MSST…FEEF) and 52–76 (DDET…HPIA). 2 stretches are compositionally biased toward basic and acidic residues: residues 7 to 20 (TKKD…KKET) and 57 to 70 (ESEF…ELRK).

It belongs to the DSS1/SEM1 family. Part of the 26S proteasome.

It is found in the nucleus. The protein resides in the cytoplasm. Functionally, subunit of the 26S proteasome which plays a role in ubiquitin-dependent proteolysis. Has an essential role in oogenesis and larval growth. Required for intestinal function and default lifespan. This chain is Probable 26S proteasome complex subunit dss-1, found in Caenorhabditis briggsae.